The primary structure comprises 155 residues: MSETEPTVYAYTDGACRGNPGPGGWGVLLRYGSKTREIYGGERETTNNRMELMAAIRALETLSRPCKVKIVTDSQYVKKGITEWVAQWEKRGWKTAGRSPVKNIDLWQRLIQAEQRHQVSWGWIKGHSGHPENEAADRLANRGIDELLQSDKIPA.

An RNase H type-1 domain is found at Thr4–Asp145. 4 residues coordinate Mg(2+): Asp13, Glu51, Asp73, and Asp137.

Belongs to the RNase H family. Monomer. It depends on Mg(2+) as a cofactor.

It localises to the cytoplasm. The enzyme catalyses Endonucleolytic cleavage to 5'-phosphomonoester.. Functionally, endonuclease that specifically degrades the RNA of RNA-DNA hybrids. The polypeptide is Ribonuclease H (Methylococcus capsulatus (strain ATCC 33009 / NCIMB 11132 / Bath)).